The following is a 524-amino-acid chain: 2-isopropylmalate synthase (524 aa).

The region spanning 12–274 is the Pyruvate carboxyltransferase domain; sequence VIIFDTTLRD…WNRIETTMLT (263 aa). 4 residues coordinate Mn(2+): D21, H209, H211, and N245. Residues 398-524 form a regulatory domain region; the sequence is KLMSLTVIAG…EDAPTVAVAG (127 aa).

Belongs to the alpha-IPM synthase/homocitrate synthase family. LeuA type 1 subfamily. In terms of assembly, homodimer. Mn(2+) is required as a cofactor.

It is found in the cytoplasm. The catalysed reaction is 3-methyl-2-oxobutanoate + acetyl-CoA + H2O = (2S)-2-isopropylmalate + CoA + H(+). Its pathway is amino-acid biosynthesis; L-leucine biosynthesis; L-leucine from 3-methyl-2-oxobutanoate: step 1/4. Functionally, catalyzes the condensation of the acetyl group of acetyl-CoA with 3-methyl-2-oxobutanoate (2-ketoisovalerate) to form 3-carboxy-3-hydroxy-4-methylpentanoate (2-isopropylmalate). The sequence is that of 2-isopropylmalate synthase from Rhodopseudomonas palustris (strain TIE-1).